The chain runs to 226 residues: Ribonuclease 3 (226 aa).

The RNase III domain maps to 5–127; it reads TFQRGDPIGH…IVAAIYLDCG (123 aa). Glu40 is a binding site for Mg(2+). Residue Asp44 is part of the active site. 2 residues coordinate Mg(2+): Asp113 and Glu116. Residue Glu116 is part of the active site. A DRBM domain is found at 154 to 224; it reads DPKTRLQEWL…ATLVIAQLDS (71 aa).

It belongs to the ribonuclease III family. As to quaternary structure, homodimer. Mg(2+) serves as cofactor.

The protein resides in the cytoplasm. The catalysed reaction is Endonucleolytic cleavage to 5'-phosphomonoester.. Its function is as follows. Digests double-stranded RNA. Involved in the processing of primary rRNA transcript to yield the immediate precursors to the large and small rRNAs (23S and 16S). Processes some mRNAs, and tRNAs when they are encoded in the rRNA operon. Processes pre-crRNA and tracrRNA of type II CRISPR loci if present in the organism. The sequence is that of Ribonuclease 3 from Xanthomonas axonopodis pv. citri (strain 306).